The chain runs to 359 residues: GTPase Obg (359 aa).

The Obg domain maps to 1-159 (MQFIDQAEIQ…RSLRLELKLL (159 aa)). The region spanning 160-328 (AEVGIIGLPN…LLHQIWQELE (169 aa)) is the OBG-type G domain. GTP contacts are provided by residues 166-173 (GLPNAGKS), 191-195 (FTTLV), 213-216 (DIPG), 280-283 (NKID), and 309-311 (SAI). Mg(2+)-binding residues include S173 and T193.

Belongs to the TRAFAC class OBG-HflX-like GTPase superfamily. OBG GTPase family. As to quaternary structure, monomer. The cofactor is Mg(2+).

The protein localises to the cytoplasm. In terms of biological role, an essential GTPase which binds GTP, GDP and possibly (p)ppGpp with moderate affinity, with high nucleotide exchange rates and a fairly low GTP hydrolysis rate. Plays a role in control of the cell cycle, stress response, ribosome biogenesis and in those bacteria that undergo differentiation, in morphogenesis control. The sequence is that of GTPase Obg from Cyanothece sp. (strain PCC 7425 / ATCC 29141).